Here is a 225-residue protein sequence, read N- to C-terminus: 3-dehydroquinate dehydratase (225 aa).

Residues S6, 30 to 32 (EWR), and R62 contribute to the 3-dehydroquinate site. H118 (proton donor/acceptor) is an active-site residue. K143 functions as the Schiff-base intermediate with substrate in the catalytic mechanism. 3-dehydroquinate-binding residues include R186, S205, and Q209.

The protein belongs to the type-I 3-dehydroquinase family. In terms of assembly, homodimer.

The catalysed reaction is 3-dehydroquinate = 3-dehydroshikimate + H2O. The protein operates within metabolic intermediate biosynthesis; chorismate biosynthesis; chorismate from D-erythrose 4-phosphate and phosphoenolpyruvate: step 3/7. Its function is as follows. Involved in the third step of the chorismate pathway, which leads to the biosynthesis of aromatic amino acids. Catalyzes the cis-dehydration of 3-dehydroquinate (DHQ) and introduces the first double bond of the aromatic ring to yield 3-dehydroshikimate. The polypeptide is 3-dehydroquinate dehydratase (Streptococcus pneumoniae (strain ATCC 700669 / Spain 23F-1)).